A 122-amino-acid polypeptide reads, in one-letter code: Large ribosomal subunit protein uL14c (122 aa).

It belongs to the universal ribosomal protein uL14 family. In terms of assembly, part of the 50S ribosomal subunit.

The protein localises to the plastid. The protein resides in the chloroplast. Its function is as follows. Binds to 23S rRNA. The chain is Large ribosomal subunit protein uL14c from Fagopyrum esculentum subsp. ancestrale (Wild buckwheat).